Reading from the N-terminus, the 391-residue chain is Mannonate dehydratase (391 aa).

The disordered stretch occupies residues 334–359 (ERRRERDGGPRLPLRPDHGHHLLDDL).

The protein belongs to the mannonate dehydratase family. Requires Fe(2+) as cofactor. Mn(2+) is required as a cofactor.

The catalysed reaction is D-mannonate = 2-dehydro-3-deoxy-D-gluconate + H2O. Its pathway is carbohydrate metabolism; pentose and glucuronate interconversion. Functionally, catalyzes the dehydration of D-mannonate. The polypeptide is Mannonate dehydratase (Chromohalobacter salexigens (strain ATCC BAA-138 / DSM 3043 / CIP 106854 / NCIMB 13768 / 1H11)).